Consider the following 637-residue polypeptide: Anthranilate synthase, phenazine specific (637 aa).

The interval 1–434 is anthranilate synthase component I; it reads MSQTAAHLME…QREQIQADFS (434 aa). The Glutamine amidotransferase type-1 domain occupies 437–628; the sequence is QVLIVDAEDT…LRHALIHTPV (192 aa). Catalysis depends on for GATase activity residues Cys-517, His-602, and Glu-604.

It catalyses the reaction chorismate + L-glutamine = anthranilate + pyruvate + L-glutamate + H(+). It functions in the pathway antibiotic biosynthesis; phenazine biosynthesis. Its function is as follows. Involved in the biosynthesis of the antibiotic, phenazine, a nitrogen-containing heterocyclic molecule having important roles in virulence, competition and biological control. This chain is Anthranilate synthase, phenazine specific (phzB), found in Pseudomonas chlororaphis (Pseudomonas aureofaciens).